The primary structure comprises 349 residues: tRNA-specific 2-thiouridylase MnmA (349 aa).

Residues 7-14 (GLSGGVDS) and Leu33 each bind ATP. Cys94 serves as the catalytic Nucleophile. Cys94 and Cys193 are joined by a disulfide. Gly119 is an ATP binding site. The tract at residues 143–145 (KDQ) is interaction with tRNA. The active-site Cysteine persulfide intermediate is the Cys193. The interval 298–299 (RY) is interaction with tRNA.

Belongs to the MnmA/TRMU family.

The protein localises to the cytoplasm. It catalyses the reaction S-sulfanyl-L-cysteinyl-[protein] + uridine(34) in tRNA + AH2 + ATP = 2-thiouridine(34) in tRNA + L-cysteinyl-[protein] + A + AMP + diphosphate + H(+). Functionally, catalyzes the 2-thiolation of uridine at the wobble position (U34) of tRNA, leading to the formation of s(2)U34. The chain is tRNA-specific 2-thiouridylase MnmA from Rippkaea orientalis (strain PCC 8801 / RF-1) (Cyanothece sp. (strain PCC 8801)).